The following is a 218-amino-acid chain: 7-cyano-7-deazaguanine synthase (218 aa).

9-19 (YSGGMDSFTVL) contacts ATP. Residues Cys185, Cys193, Cys196, and Cys199 each coordinate Zn(2+).

The protein belongs to the QueC family. It depends on Zn(2+) as a cofactor.

The catalysed reaction is 7-carboxy-7-deazaguanine + NH4(+) + ATP = 7-cyano-7-deazaguanine + ADP + phosphate + H2O + H(+). It functions in the pathway purine metabolism; 7-cyano-7-deazaguanine biosynthesis. Catalyzes the ATP-dependent conversion of 7-carboxy-7-deazaguanine (CDG) to 7-cyano-7-deazaguanine (preQ(0)). The chain is 7-cyano-7-deazaguanine synthase from Pseudoalteromonas translucida (strain TAC 125).